We begin with the raw amino-acid sequence, 261 residues long: Pyridoxine-5'-phosphate oxidase (261 aa).

42 to 45 (RGDR) contacts pyridoxal 5'-phosphate. Position 95–98 (95–98 (RMLL)) interacts with FMN. Residue K100 participates in pyridoxal 5'-phosphate binding. Residues 110-111 (FT), 116-117 (RK), and Q139 contribute to the FMN site. Positions 157, 161, and 165 each coordinate pyridoxal 5'-phosphate. FMN contacts are provided by residues 174–175 (QS) and W219. 225–227 (RLH) lines the pyridoxal 5'-phosphate pocket. R229 contributes to the FMN binding site. T238 carries the phosphothreonine modification. S241 bears the Phosphoserine mark.

Belongs to the pyridoxamine 5'-phosphate oxidase family. As to quaternary structure, homodimer. It depends on FMN as a cofactor. As to expression, detected in adult liver.

It catalyses the reaction pyridoxamine 5'-phosphate + O2 + H2O = pyridoxal 5'-phosphate + H2O2 + NH4(+). The catalysed reaction is pyridoxine 5'-phosphate + O2 = pyridoxal 5'-phosphate + H2O2. It functions in the pathway cofactor metabolism; pyridoxal 5'-phosphate salvage; pyridoxal 5'-phosphate from pyridoxamine 5'-phosphate: step 1/1. The protein operates within cofactor metabolism; pyridoxal 5'-phosphate salvage; pyridoxal 5'-phosphate from pyridoxine 5'-phosphate: step 1/1. Its function is as follows. Catalyzes the oxidation of either pyridoxine 5'-phosphate (PNP) or pyridoxamine 5'-phosphate (PMP) into pyridoxal 5'-phosphate (PLP). This Rattus norvegicus (Rat) protein is Pyridoxine-5'-phosphate oxidase (Pnpo).